A 490-amino-acid polypeptide reads, in one-letter code: Bifunctional dihydrocamalexate synthase/camalexin synthase (490 aa).

A helical membrane pass occupies residues 1–21; sequence MSVFLCFLVLLPLILIFLNVL.

Belongs to the cytochrome P450 family.

Its subcellular location is the membrane. It carries out the reaction 2-(L-cystein-S-yl)-2-(1H-indol-3-yl)-acetonitrile + 2 reduced [NADPH--hemoprotein reductase] + 2 O2 = camalexin + hydrogen cyanide + 2 oxidized [NADPH--hemoprotein reductase] + CO2 + 4 H2O + 2 H(+). It catalyses the reaction 2-(L-cystein-S-yl)-2-(1H-indol-3-yl)-acetonitrile + reduced [NADPH--hemoprotein reductase] + O2 = (R)-dihydrocamalexate + hydrogen cyanide + oxidized [NADPH--hemoprotein reductase] + 2 H2O + 2 H(+). The enzyme catalyses (R)-dihydrocamalexate + reduced [NADPH--hemoprotein reductase] + O2 = camalexin + oxidized [NADPH--hemoprotein reductase] + CO2 + 2 H2O. Functionally, multifunctional enzyme involved in the biosynthesis of the indole-derived phytoalexin camalexin. Catalyzes two reactions, the formation of dihydrocamalexate from indole-3-acetonitrile-cysteine conjugate and the oxidative decarboxylation of dihydrocamalexate which is the final step in camalexin biosynthesis. Required for the resistance to the fungal pathogens A.brassicicola, B.cinerea, B.elliptica, B.tulipae, L.maculans and Colletotrichum higginsianum. Seems not to be required for resistance to P.syringae, P.porri, and not involved in age-related resistance. The polypeptide is Bifunctional dihydrocamalexate synthase/camalexin synthase (CYP71B15) (Arabidopsis thaliana (Mouse-ear cress)).